Reading from the N-terminus, the 242-residue chain is Dickkopf-like protein 1 (242 aa).

The first 30 residues, 1-30 (MGEASPPAPARRHLLVLLLLLSTLVIPSAA), serve as a signal peptide directing secretion. N-linked (GlcNAc...) asparagine glycans are attached at residues asparagine 97 and asparagine 112.

As to quaternary structure, interacts with SLXL1; Co-localize in seminiferous tubules. Interacts with SLY. N-glycosylated during spermatogenesis. Not N-glycosylated in mature sperm. As to expression, more highly expressed in adult testis than in fetal testis. Exclusively expressed in the testis (at protein level). Intense expression in stages II, III and IV of spermatogenesis, whereas expression is lower in stage I.

The protein resides in the secreted. It localises to the cytoplasmic vesicle. Its subcellular location is the secretory vesicle. It is found in the acrosome. Functionally, involved in fertilization by facilitating sperm penetration of the zona pellucida. May promote spermatocyte apoptosis, thereby limiting sperm production. In adults, may reduce testosterone synthesis in Leydig cells. Is not essential either for development or fertility. This is Dickkopf-like protein 1 from Homo sapiens (Human).